We begin with the raw amino-acid sequence, 233 residues long: Large ribosomal subunit protein eL6x (233 aa).

A compositionally biased stretch (basic and acidic residues) spans 48 to 72 (HDAKSKVDAPVEKPPKFYPAEDVKK). Residues 48 to 80 (HDAKSKVDAPVEKPPKFYPAEDVKKPLPNRRTA) are disordered.

It belongs to the eukaryotic ribosomal protein eL6 family.

In Arabidopsis thaliana (Mouse-ear cress), this protein is Large ribosomal subunit protein eL6x (RPL6C).